The following is a 690-amino-acid chain: Glycine--tRNA ligase beta subunit (690 aa).

Belongs to the class-II aminoacyl-tRNA synthetase family. As to quaternary structure, tetramer of two alpha and two beta subunits.

Its subcellular location is the cytoplasm. The enzyme catalyses tRNA(Gly) + glycine + ATP = glycyl-tRNA(Gly) + AMP + diphosphate. This is Glycine--tRNA ligase beta subunit from Lactobacillus gasseri (strain ATCC 33323 / DSM 20243 / BCRC 14619 / CIP 102991 / JCM 1131 / KCTC 3163 / NCIMB 11718 / NCTC 13722 / AM63).